Consider the following 92-residue polypeptide: Large ribosomal subunit protein eL43 (92 aa).

The segment at 39–60 adopts a C4-type zinc-finger fold; the sequence is CDFCGKYGMKRKAVGIWSCKGC.

It belongs to the eukaryotic ribosomal protein eL43 family.

The polypeptide is Large ribosomal subunit protein eL43 (RPL37a) (Ostreococcus lucimarinus (strain CCE9901)).